The following is a 219-amino-acid chain: Probable nicotinate-nucleotide adenylyltransferase (219 aa).

This sequence belongs to the NadD family.

The catalysed reaction is nicotinate beta-D-ribonucleotide + ATP + H(+) = deamido-NAD(+) + diphosphate. Its pathway is cofactor biosynthesis; NAD(+) biosynthesis; deamido-NAD(+) from nicotinate D-ribonucleotide: step 1/1. In terms of biological role, catalyzes the reversible adenylation of nicotinate mononucleotide (NaMN) to nicotinic acid adenine dinucleotide (NaAD). In Enterococcus faecalis (strain ATCC 700802 / V583), this protein is Probable nicotinate-nucleotide adenylyltransferase.